The sequence spans 324 residues: Glutathione synthetase (324 aa).

The 186-residue stretch at 124–309 folds into the ATP-grasp domain; it reads KLAIAQFREF…VAGMFIDALE (186 aa). 150-206 contacts ATP; it reads HAEQGDVIFKPLDGMGGAGIFRVGADGMNLGSVIETLTHNGTRTVMAQQYIPAIRDG. Glu280 and Asn282 together coordinate Mg(2+).

This sequence belongs to the prokaryotic GSH synthase family. It depends on Mg(2+) as a cofactor. Mn(2+) serves as cofactor.

It carries out the reaction gamma-L-glutamyl-L-cysteine + glycine + ATP = glutathione + ADP + phosphate + H(+). The protein operates within sulfur metabolism; glutathione biosynthesis; glutathione from L-cysteine and L-glutamate: step 2/2. In Ralstonia nicotianae (strain ATCC BAA-1114 / GMI1000) (Ralstonia solanacearum), this protein is Glutathione synthetase.